The sequence spans 215 residues: uncharacterized protein (215 aa).

6 helical membrane-spanning segments follow: residues 3–23 (LLAY…LRSI), 30–50 (ANLL…GLTW), 59–79 (LGLS…LRFW), 87–107 (WGTY…AICV), 122–142 (VSTC…SNIY), and 156–176 (VLFG…LIYV).

The protein belongs to the major facilitator superfamily. Allantoate permease family.

The protein resides in the membrane. This is an uncharacterized protein from Saccharomyces cerevisiae (strain ATCC 204508 / S288c) (Baker's yeast).